We begin with the raw amino-acid sequence, 390 residues long: Succinyl-diaminopimelate desuccinylase (390 aa).

His-74 serves as a coordination point for Zn(2+). The active site involves Asp-76. Residue Asp-107 coordinates Zn(2+). The active-site Proton acceptor is the Glu-140. Zn(2+) contacts are provided by Glu-141, Glu-169, and His-363.

This sequence belongs to the peptidase M20A family. DapE subfamily. As to quaternary structure, homodimer. Requires Zn(2+) as cofactor. It depends on Co(2+) as a cofactor.

It carries out the reaction N-succinyl-(2S,6S)-2,6-diaminopimelate + H2O = (2S,6S)-2,6-diaminopimelate + succinate. It participates in amino-acid biosynthesis; L-lysine biosynthesis via DAP pathway; LL-2,6-diaminopimelate from (S)-tetrahydrodipicolinate (succinylase route): step 3/3. Functionally, catalyzes the hydrolysis of N-succinyl-L,L-diaminopimelic acid (SDAP), forming succinate and LL-2,6-diaminopimelate (DAP), an intermediate involved in the bacterial biosynthesis of lysine and meso-diaminopimelic acid, an essential component of bacterial cell walls. This is Succinyl-diaminopimelate desuccinylase from Bartonella quintana (strain Toulouse) (Rochalimaea quintana).